The chain runs to 1256 residues: Octopamine receptor beta-3R (1256 aa).

The Extracellular portion of the chain corresponds to 1 to 143 (MSGVNVADLL…LDLSLLLLKG (143 aa)). Asn-36, Asn-113, and Asn-117 each carry an N-linked (GlcNAc...) asparagine glycan. The chain crosses the membrane as a helical span at residues 144-164 (FIFSSIILAAVLGNALVIISV). The Cytoplasmic portion of the chain corresponds to 165-171 (QRNRKLR). A helical membrane pass occupies residues 172–192 (VITNYFVVSLAMADMLVALCA). Over 193-213 (MTFNASVELSGGKWMFGPFMC) the chain is Extracellular. N-linked (GlcNAc...) asparagine glycosylation is present at Asn-196. Residues 214–236 (NVYNSLDVYFSTASILHLCCISV) traverse the membrane as a helical segment. Residues 237 to 258 (DRYYAIVRPLEYPLNMTHKTVC) lie on the Cytoplasmic side of the membrane. A helical transmembrane segment spans residues 259–279 (FMLANVWILPALISFTPIFLG). Residues 280–305 (WYTTEEHLREISLHPDQCSFVVNKAY) lie on the Extracellular side of the membrane. A helical membrane pass occupies residues 306-326 (ALISSSVSFWIPGIVMLVMYW). Topologically, residues 327–1169 (RIFKEAIRQR…WKAEHKAART (843 aa)) are cytoplasmic. 5 disordered regions span residues 377 to 427 (AREE…DLRD), 480 to 512 (ELDKEHSHPNGPQQQLSLTSGSGNSEPEPESTA), 665 to 698 (LSHSYNGCGGGKERKLERRQRQHSDTDSTPNKPD), 751 to 774 (GESPQQPATPPPSLSPPELPEPSG), and 1087 to 1117 (DTTVTTSSKRSIHEQTPDLGQRPASSSSSTR). The segment covering 396–406 (TDEDDDRDECD) has biased composition (acidic residues). Over residues 489 to 498 (NGPQQQLSLT) the composition is skewed to polar residues. Residues 757–770 (PATPPPSLSPPELP) show a composition bias toward pro residues. The helical transmembrane segment at 1170 to 1190 (LGIIMGVFLLCWLPFFLWYVI) threads the bilayer. Over 1191–1202 (TSLCGPACPCPD) the chain is Extracellular. Residues 1203–1223 (VLVVVLFWIGYFNSTLNPLIY) traverse the membrane as a helical segment. Over 1224-1256 (AYFNRDFREAFRNTLECVLPCLEKRNPYNAYYV) the chain is Cytoplasmic.

Belongs to the G-protein coupled receptor 1 family. In the adult, expressed in the inferior and superior protocerebrum, the posterior lateral protocerebrum, the deutocerebrum, the surface of the subesophageal ganglion, the lateral cell body region, the cortical layer of the ventral nerve cord and the optic lobe medulla of the central nervous system (CNS). Also expressed in the nurse cells and follicle cells of the egg chambers in the ovary at oogenic stages 1-10, and spermatogonia and spermatocytes in the testis. Expressed ubiquitously in the embryonic CNS. In larvae, expressed in the ventral cortical layer of the ventral nerve cord, the cortical layer of the brain lobes, salivary glands, midgut, imaginal disks and developing reproductive organs. Expressed in the larval prothoracic gland with weak expression in other regions of the ring gland.

The protein localises to the cell membrane. Its function is as follows. Autoreceptor for octopamine, which is a neurotransmitter, neurohormone, and neuromodulator in invertebrates. Probably also acts as a receptor for tyramine during ecdysone biosynthesis. Required for the biosynthesis of the steroid hormone ecdysone which is necessary for metamorphosis. Involved in activation of prothoracicotropic hormone and insulin-like peptide signaling which is required for the expression of ecdysone biosynthetic genes. The sequence is that of Octopamine receptor beta-3R from Drosophila melanogaster (Fruit fly).